We begin with the raw amino-acid sequence, 85 residues long: U4-theraphotoxin-Hhn1a (85 aa).

The first 22 residues, 1–22 (MKVTLIAILTCATVLVLHTTAA), serve as a signal peptide directing secretion. A propeptide spanning residues 23–48 (EELEAESQLMEVGMPDTELAAVDEER) is cleaved from the precursor. Disulfide bonds link Cys52–Cys66, Cys56–Cys77, and Cys71–Cys82.

The protein belongs to the neurotoxin 12 (Hwtx-2) family. 02 (Hwtx-2) subfamily. In terms of assembly, monomer. Expressed by the venom gland.

The protein localises to the secreted. Its function is as follows. Neurotoxin active on both insects and mammals. This chain is U4-theraphotoxin-Hhn1a, found in Cyriopagopus hainanus (Chinese bird spider).